The following is a 368-amino-acid chain: Phospho-N-acetylmuramoyl-pentapeptide-transferase (368 aa).

Transmembrane regions (helical) follow at residues Y23–G43, V72–A92, H98–Y118, V139–L159, L170–S190, G201–C221, A238–F258, V281–V301, and K345–L365.

The protein belongs to the glycosyltransferase 4 family. MraY subfamily. Mg(2+) is required as a cofactor.

It is found in the cell inner membrane. The catalysed reaction is UDP-N-acetyl-alpha-D-muramoyl-L-alanyl-gamma-D-glutamyl-meso-2,6-diaminopimeloyl-D-alanyl-D-alanine + di-trans,octa-cis-undecaprenyl phosphate = di-trans,octa-cis-undecaprenyl diphospho-N-acetyl-alpha-D-muramoyl-L-alanyl-D-glutamyl-meso-2,6-diaminopimeloyl-D-alanyl-D-alanine + UMP. It participates in cell wall biogenesis; peptidoglycan biosynthesis. Functionally, catalyzes the initial step of the lipid cycle reactions in the biosynthesis of the cell wall peptidoglycan: transfers peptidoglycan precursor phospho-MurNAc-pentapeptide from UDP-MurNAc-pentapeptide onto the lipid carrier undecaprenyl phosphate, yielding undecaprenyl-pyrophosphoryl-MurNAc-pentapeptide, known as lipid I. This chain is Phospho-N-acetylmuramoyl-pentapeptide-transferase, found in Chlorobaculum tepidum (strain ATCC 49652 / DSM 12025 / NBRC 103806 / TLS) (Chlorobium tepidum).